A 349-amino-acid polypeptide reads, in one-letter code: tRNA pseudouridine synthase D (349 aa).

F27 contacts substrate. D80 (nucleophile) is an active-site residue. A substrate-binding site is contributed by N129. The 149-residue stretch at 155–303 folds into the TRUD domain; sequence GVPNYFGAQR…VEAARRAMLL (149 aa). Residue F329 coordinates substrate.

Belongs to the pseudouridine synthase TruD family.

It catalyses the reaction uridine(13) in tRNA = pseudouridine(13) in tRNA. Its function is as follows. Responsible for synthesis of pseudouridine from uracil-13 in transfer RNAs. The chain is tRNA pseudouridine synthase D from Klebsiella pneumoniae (strain 342).